A 438-amino-acid chain; its full sequence is sn-glycerol-3-phosphate-binding periplasmic protein UgpB (438 aa).

Positions 1–23 (MKPLHYTASALALGLALMGNAQA) are cleaved as a signal peptide. The sn-glycerol 3-phosphate site is built by Y65, E89, S144, S270, G307, Y346, and R397.

Belongs to the bacterial solute-binding protein 1 family. In terms of assembly, the complex is composed of two ATP-binding proteins (UgpC), two transmembrane proteins (UgpA and UgpE) and a solute-binding protein (UgpB).

It localises to the periplasm. Part of the ABC transporter complex UgpBAEC involved in sn-glycerol-3-phosphate (G3P) import. Binds G3P. This Shigella flexneri serotype 5b (strain 8401) protein is sn-glycerol-3-phosphate-binding periplasmic protein UgpB (ugpB).